The following is a 203-amino-acid chain: Early nodulin-like protein 9 (203 aa).

Residues Met-1–Ala-27 form the signal peptide. Positions Arg-28 to Ala-130 constitute a Phytocyanin domain. Cys-84 and Cys-118 form a disulfide bridge. N-linked (GlcNAc...) asparagine glycosylation is present at Asn-103. The interval Gly-134–Ala-181 is disordered. Residue Ser-180 is the site of GPI-anchor amidated serine attachment. Positions Ala-181 to His-203 are cleaved as a propeptide — removed in mature form.

Belongs to the early nodulin-like (ENODL) family. As to expression, specifically observed at the plasma membrane of sieve elements in vascular tissues of leaves, stems, roots, flowers and reproductive organs. Absent from companion cells.

Its subcellular location is the cell membrane. Functionally, may act as a carbohydrate transporter. Mainly required for reproductive functions. This chain is Early nodulin-like protein 9, found in Arabidopsis thaliana (Mouse-ear cress).